We begin with the raw amino-acid sequence, 460 residues long: Benzyl alcohol O-benzoyltransferase (460 aa).

Catalysis depends on proton acceptor residues His167 and Asp382.

Belongs to the plant acyltransferase family.

It catalyses the reaction benzyl alcohol + benzoyl-CoA = benzyl benzoate + CoA. Probably involved in the formation of volatile ester benzylbenzoate. This chain is Benzyl alcohol O-benzoyltransferase (HSR201), found in Nicotiana tabacum (Common tobacco).